We begin with the raw amino-acid sequence, 339 residues long: Glycerol-3-phosphate dehydrogenase [NAD(P)+] (339 aa).

The NADPH site is built by Ser-14, Tyr-15, His-35, and Lys-109. Sn-glycerol 3-phosphate is bound by residues Lys-109, Gly-138, and Thr-140. NADPH is bound at residue Ala-142. Lys-194, Asp-247, Ser-257, Arg-258, and Asn-259 together coordinate sn-glycerol 3-phosphate. The Proton acceptor role is filled by Lys-194. Residue Arg-258 participates in NADPH binding. Residues Val-282 and Glu-284 each contribute to the NADPH site.

This sequence belongs to the NAD-dependent glycerol-3-phosphate dehydrogenase family.

It localises to the cytoplasm. The catalysed reaction is sn-glycerol 3-phosphate + NAD(+) = dihydroxyacetone phosphate + NADH + H(+). The enzyme catalyses sn-glycerol 3-phosphate + NADP(+) = dihydroxyacetone phosphate + NADPH + H(+). The protein operates within membrane lipid metabolism; glycerophospholipid metabolism. In terms of biological role, catalyzes the reduction of the glycolytic intermediate dihydroxyacetone phosphate (DHAP) to sn-glycerol 3-phosphate (G3P), the key precursor for phospholipid synthesis. This chain is Glycerol-3-phosphate dehydrogenase [NAD(P)+], found in Shewanella pealeana (strain ATCC 700345 / ANG-SQ1).